The following is a 200-amino-acid chain: Large ribosomal subunit protein uL4 (200 aa).

Residues 38–68 (GRQGSKQQKTRSDVRGGGKRPWRQKGTGRAR) form a disordered region. A compositionally biased stretch (basic residues) spans 54 to 65 (GGKRPWRQKGTG).

It belongs to the universal ribosomal protein uL4 family. Part of the 50S ribosomal subunit.

One of the primary rRNA binding proteins, this protein initially binds near the 5'-end of the 23S rRNA. It is important during the early stages of 50S assembly. It makes multiple contacts with different domains of the 23S rRNA in the assembled 50S subunit and ribosome. Its function is as follows. Forms part of the polypeptide exit tunnel. The protein is Large ribosomal subunit protein uL4 of Pseudomonas fluorescens (strain Pf0-1).